We begin with the raw amino-acid sequence, 411 residues long: Arginine deiminase (411 aa).

The Amidino-cysteine intermediate role is filled by Cys401.

Belongs to the arginine deiminase family.

Its subcellular location is the cytoplasm. It catalyses the reaction L-arginine + H2O = L-citrulline + NH4(+). The protein operates within amino-acid degradation; L-arginine degradation via ADI pathway; carbamoyl phosphate from L-arginine: step 1/2. The polypeptide is Arginine deiminase (Staphylococcus epidermidis (strain ATCC 35984 / DSM 28319 / BCRC 17069 / CCUG 31568 / BM 3577 / RP62A)).